Here is a 175-residue protein sequence, read N- to C-terminus: Bifunctional protein PyrR (175 aa).

A PRPP-binding motif is present at residues 98–110; that stretch reads VIIIDDVLYTGRT.

This sequence belongs to the purine/pyrimidine phosphoribosyltransferase family. PyrR subfamily. Homodimer and homohexamer; in equilibrium.

The catalysed reaction is UMP + diphosphate = 5-phospho-alpha-D-ribose 1-diphosphate + uracil. Functionally, regulates transcriptional attenuation of the pyrimidine nucleotide (pyr) operon by binding in a uridine-dependent manner to specific sites on pyr mRNA. This disrupts an antiterminator hairpin in the RNA and favors formation of a downstream transcription terminator, leading to a reduced expression of downstream genes. Its function is as follows. Also displays a weak uracil phosphoribosyltransferase activity which is not physiologically significant. This Staphylococcus aureus (strain bovine RF122 / ET3-1) protein is Bifunctional protein PyrR.